The following is a 1456-amino-acid chain: DNA polymerase gamma, mitochondrial (1456 aa).

The transit peptide at 1–41 (MLTPVRCRTVPNATVATAARVLRRANLFSRYPRQLGHLRWD) directs the protein to the mitochondrion. Disordered stretches follow at residues 1200 to 1266 (APEM…SLDD) and 1308 to 1443 (AVTT…SWKP). The span at 1204–1239 (AAVPSTSSESKSKASATTSTTTTENATASPSSSSNV) shows a compositional bias: low complexity. A compositionally biased stretch (pro residues) spans 1315-1325 (PEPPTNPPPVA). 2 stretches are compositionally biased toward low complexity: residues 1346–1371 (PKNPTPTLTPTTKKSNPTSTPTTPKP) and 1411–1428 (TASVGGRATTTTATATAT).

Belongs to the DNA polymerase type-A family. Requires Mg(2+) as cofactor.

The protein localises to the mitochondrion. It carries out the reaction DNA(n) + a 2'-deoxyribonucleoside 5'-triphosphate = DNA(n+1) + diphosphate. Its function is as follows. Involved in the replication of mitochondrial DNA. The polypeptide is DNA polymerase gamma, mitochondrial (mip-1) (Neurospora crassa (strain ATCC 24698 / 74-OR23-1A / CBS 708.71 / DSM 1257 / FGSC 987)).